A 418-amino-acid polypeptide reads, in one-letter code: Thyroxine-binding globulin (418 aa).

Positions 1–20 are cleaved as a signal peptide; sequence MSVFFYLFVLVFGLQATIHC. Residues asparagine 24, asparagine 39, asparagine 102, asparagine 168, asparagine 227, and asparagine 256 are each glycosylated (N-linked (GlcNAc...) asparagine). The thyroxine site is built by asparagine 296 and lysine 401.

It belongs to the serpin family.

It is found in the secreted. Functionally, major thyroid hormone transport protein in serum. This is Thyroxine-binding globulin (Serpina7) from Mus musculus (Mouse).